The following is a 124-amino-acid chain: Late histone H2A.2.1 (124 aa).

Residues 1 to 18 (MSGRGKGAKAKSKAKSRS) show a composition bias toward basic residues. The segment at 1-21 (MSGRGKGAKAKSKAKSRSSRA) is disordered. Residue Ser-2 is modified to N-acetylserine. At Ser-2 the chain carries Phosphoserine. N5-methylglutamine is present on Gln-104. Lys-119 participates in a covalent cross-link: Glycyl lysine isopeptide (Lys-Gly) (interchain with G-Cter in ubiquitin).

This sequence belongs to the histone H2A family. As to quaternary structure, the nucleosome is a histone octamer containing two molecules each of H2A, H2B, H3 and H4 assembled in one H3-H4 heterotetramer and two H2A-H2B heterodimers. The octamer wraps approximately 147 bp of DNA. Monoubiquitination of Lys-119 gives a specific tag for epigenetic transcriptional repression. Post-translationally, phosphorylation of Ser-2 directly represses transcription.

It localises to the nucleus. The protein localises to the chromosome. Functionally, core component of nucleosome. Nucleosomes wrap and compact DNA into chromatin, limiting DNA accessibility to the cellular machineries which require DNA as a template. Histones thereby play a central role in transcription regulation, DNA repair, DNA replication and chromosomal stability. DNA accessibility is regulated via a complex set of post-translational modifications of histones, also called histone code, and nucleosome remodeling. The protein is Late histone H2A.2.1 of Psammechinus miliaris (Green sea urchin).